The sequence spans 103 residues: Non-histone chromosomal protein HMG-14B (103 aa).

Residues 1–103 are disordered; it reads MPKRKVAASR…AVEKEEVKSE (103 aa). A compositionally biased stretch (basic and acidic residues) spans 29–50; sequence VPDKAEPKAKALAAKDKSENKK. A compositionally biased stretch (basic residues) spans 51–60; sequence AQSKGKKGPK. Over residues 94 to 103 the composition is skewed to basic and acidic residues; sequence AVEKEEVKSE.

It belongs to the HMGN family.

It is found in the nucleus. Its function is as follows. Binds to the inner side of the nucleosomal DNA thus altering the interaction between the DNA and the histone octamer. May be involved in the process which maintains transcribable genes in a unique chromatin conformation. The sequence is that of Non-histone chromosomal protein HMG-14B (HMG14) from Gallus gallus (Chicken).